The chain runs to 26 residues: M-poneritoxin-Ng1c (26 aa).

In terms of tissue distribution, expressed by the venom gland.

The protein localises to the secreted. It is found in the target cell membrane. Has a broad spectrum of activity against both Gram-positive and Gram-negative bacteria and S.cerevisiae. Has insecticidal and hemolytic activities. May act by disrupting the integrity of the bacterial cell membrane. This chain is M-poneritoxin-Ng1c, found in Neoponera goeldii (Ponerine ant).